A 158-amino-acid polypeptide reads, in one-letter code: Transcriptional repressor NrdR (158 aa).

Residues 3-34 fold into a zinc finger; that stretch reads CPFCSFPESRVLDSRPADEGNSIRRRRECGEC. Residues 49-139 form the ATP-cone domain; that stretch reads LVVVKKDGRR…VYRQFGDIYS (91 aa).

Belongs to the NrdR family. It depends on Zn(2+) as a cofactor.

Its function is as follows. Negatively regulates transcription of bacterial ribonucleotide reductase nrd genes and operons by binding to NrdR-boxes. This chain is Transcriptional repressor NrdR, found in Desulforamulus reducens (strain ATCC BAA-1160 / DSM 100696 / MI-1) (Desulfotomaculum reducens).